The chain runs to 370 residues: D-aspartate oxidase (370 aa).

8 residues coordinate FAD: Ile-15, Ala-49, Ser-50, Gly-54, Val-166, Arg-317, Gly-346, and Gln-348. The short motif at 368–370 is the Microbody targeting signal element; it reads ARL.

The protein belongs to the DAMOX/DASOX family. In terms of assembly, homotetramer. The cofactor is FAD.

It is found in the peroxisome matrix. It carries out the reaction D-aspartate + O2 + H2O = oxaloacetate + H2O2 + NH4(+). It catalyses the reaction D-glutamate + O2 + H2O = H2O2 + 2-oxoglutarate + NH4(+). Inhibited by malonate and D-malate. Very mildly inhibited by benzoate, ethylenediaminetetraacetic acid (EDTA), crotonate and anthranilate. May be very mildly inhibited by meso-tartrate. Selectively catalyzes the oxidative deamination of acidic amino acids. Protects the organism from the toxicity of D-amino acids. Enables the organism to utilize D-amino acids as a source of nutrients. Enables the organism to utilize D-aspartate as a source of nitrogen and carbon. This Vanrija humicola (Yeast) protein is D-aspartate oxidase.